The primary structure comprises 85 residues: Protein C4 (85 aa).

Glycine 2 is lipidated: N-myristoyl glycine; by host. The segment at 42–65 is disordered; it reads LNPAPTSTPTSTRTETLSNGENSR. Over residues 44 to 59 the composition is skewed to low complexity; it reads PAPTSTPTSTRTETLS.

Belongs to the geminiviridae protein AC4/C4 family.

The protein localises to the host cell membrane. In terms of biological role, pathogenicity determinant. May act as a suppressor of RNA-mediated gene silencing, also known as post-transcriptional gene silencing (PTGS), a mechanism of plant viral defense that limits the accumulation of viral RNAs. This is Protein C4 from Solanum lycopersicum (Tomato).